The chain runs to 96 residues: MHVTLVEINVHEDKVDEFIEVFRQNHLGSVQEEGNLRFDVLQDPEVNSRFYIYEAYKDEDTVAFHKTTPHYKTCVAKLESLMTGPRKKRLFNGLMP.

One can recognise an ABM domain in the interval 2-91 (HVTLVEINVH…MTGPRKKRLF (90 aa)).

This sequence belongs to the LsrG family. As to quaternary structure, homodimer.

It is found in the cytoplasm. The enzyme catalyses (2S)-2-hydroxy-3,4-dioxopentyl phosphate = 3-hydroxy-2,4-dioxopentyl phosphate. Involved in the degradation of phospho-AI-2, thereby terminating induction of the lsr operon and closing the AI-2 signaling cycle. Catalyzes the conversion of (4S)-4-hydroxy-5-phosphonooxypentane-2,3-dione (P-DPD) to 3-hydroxy-5-phosphonooxypentane-2,4-dione (P-HPD). The sequence is that of (4S)-4-hydroxy-5-phosphonooxypentane-2,3-dione isomerase from Shigella flexneri serotype 5b (strain 8401).